Here is a 222-residue protein sequence, read N- to C-terminus: Charged multivesicular body protein 4a (222 aa).

Disordered regions lie at residues 1–21 (MSGLGRLFGKGKKEKGPTPEE) and 180–211 (VGDKEEEPSVKLPSVPSTHLPAGPAPKVDEDE). The interaction with phosphoinosides stretch occupies residues 1–116 (MSGLGRLFGK…ELAAQSMKKA (116 aa)). Positions 1-150 (MSGLGRLFGK…QISDAISRPM (150 aa)) are intramolecular interaction with C-terminus. Coiled-coil stretches lie at residues 20–105 (EEAI…VLRT) and 155–180 (DVDEDELLEELEELEQEELAQELLNV). The intramolecular interaction with N-terminus stretch occupies residues 151–222 (GFGDDVDEDE…ALKQLAEWVS (72 aa)). Serine 196 bears the Phosphoserine mark.

This sequence belongs to the SNF7 family. Probable core component of the endosomal sorting required for transport complex III (ESCRT-III). ESCRT-III components are thought to multimerize to form a flat lattice on the perimeter membrane of the endosome. Several assembly forms of ESCRT-III may exist that interact and act sequentially. Self-associates; overexpression leads to the assembly of filaments that curve and associate to create circular rings. Interacts with CHMP2A. Interacts with CHMP3; the interaction requires the release of CHMP4A autoinhibition. Interacts with CHMP4B. Interacts with CHMP4C. Interacts with CHMP6. Interacts with VPS4A. Interacts with PDCD6IP; the interaction is direct. In terms of tissue distribution, widely expressed. Expressed at higher level in heart, kidney, liver and skeletal muscle. Also expressed in brain, placenta, lung and pancreas.

The protein localises to the cytoplasmic vesicle membrane. It is found in the late endosome membrane. Its function is as follows. Probable core component of the endosomal sorting required for transport complex III (ESCRT-III) which is involved in multivesicular bodies (MVBs) formation and sorting of endosomal cargo proteins into MVBs. MVBs contain intraluminal vesicles (ILVs) that are generated by invagination and scission from the limiting membrane of the endosome and mostly are delivered to lysosomes enabling degradation of membrane proteins, such as stimulated growth factor receptors, lysosomal enzymes and lipids. The MVB pathway appears to require the sequential function of ESCRT-O, -I,-II and -III complexes. ESCRT-III proteins mostly dissociate from the invaginating membrane before the ILV is released. The ESCRT machinery also functions in topologically equivalent membrane fission events, such as the terminal stages of cytokinesis and the budding of enveloped viruses (HIV-1 and other lentiviruses). ESCRT-III proteins are believed to mediate the necessary vesicle extrusion and/or membrane fission activities, possibly in conjunction with the AAA ATPase VPS4. When overexpressed, membrane-assembled circular arrays of CHMP4A filaments can promote or stabilize negative curvature and outward budding. Via its interaction with PDCD6IP involved in HIV-1 p6- and p9-dependent virus release. CHMP4A/B/C are required for the exosomal release of SDCBP, CD63 and syndecan. The polypeptide is Charged multivesicular body protein 4a (CHMP4A) (Homo sapiens (Human)).